A 194-amino-acid chain; its full sequence is E3 ubiquitin-protein ligase RNF4 (194 aa).

The span at 1 to 12 (MSTRNPQRKRRG) shows a compositional bias: basic residues. The interval 1-20 (MSTRNPQRKRRGGAVNSRQT) is required for ubiquitination activity. Positions 1–36 (MSTRNPQRKRRGGAVNSRQTQKRTRETTSTPEISLE) are disordered. Residues 6-65 (PQRKRRGGAVNSRQTQKRTRETTSTPEISLEAEPIELVETVGDEIVDLTCESLEPVVVDL) are mediates interaction with TRPS1. 4 short sequence motifs (SUMO interaction motif) span residues 40 to 43 (IELV), 50 to 53 (IVDL), 61 to 63 (VVV), and 71 to 74 (VVIV). Phosphoserine occurs at positions 98 and 99. Residues Cys-136, Cys-139, Cys-158, His-160, Cys-163, Cys-166, Cys-177, and Cys-180 each contribute to the Zn(2+) site. An RING-type zinc finger spans residues 136–181 (CPICMDGYSEIVQNGRLIVSTECGHVFCSQCLRDSLKNANTCPTCR).

Homodimer (via RING-type zinc finger domain). Interacts with GSC2. Interacts with AR/the androgen receptor and TBP. Interacts with TCF20. Interacts with PATZ1. Interacts with TRPS1; negatively regulates TRPS1 transcriptional repressor activity. Interacts with PML (isoform PML-1, isoform PML-2, isoform PML-3, isoform PML-4, isoform PML-5 and isoform PML-6). Interacts with PRDM1/Blimp-1. Post-translationally, sumoylated; conjugated by one or two SUMO1 moieties. Autoubiquitinated. In terms of tissue distribution, widely expressed with highest levels in testis.

It is found in the cytoplasm. The protein localises to the nucleus. The protein resides in the nucleoplasm. It localises to the PML body. It carries out the reaction S-ubiquitinyl-[E2 ubiquitin-conjugating enzyme]-L-cysteine + [acceptor protein]-L-lysine = [E2 ubiquitin-conjugating enzyme]-L-cysteine + N(6)-ubiquitinyl-[acceptor protein]-L-lysine.. Its pathway is protein modification; protein ubiquitination. In terms of biological role, E3 ubiquitin-protein ligase which binds polysumoylated chains covalently attached to proteins and mediates 'Lys-6'-, 'Lys-11'-, 'Lys-48'- and 'Lys-63'-linked polyubiquitination of those substrates and their subsequent targeting to the proteasome for degradation. Regulates the degradation of several proteins including PML and the transcriptional activator PEA3. Involved in chromosome alignment and spindle assembly, it regulates the kinetochore CENPH-CENPI-CENPK complex by targeting polysumoylated CENPI to proteasomal degradation. Regulates the cellular responses to hypoxia and heat shock through degradation of respectively EPAS1 and PARP1. Alternatively, it may also bind DNA/nucleosomes and have a more direct role in the regulation of transcription for instance enhancing basal transcription and steroid receptor-mediated transcriptional activation. Catalyzes ubiquitination of sumoylated PARP1 in response to PARP1 trapping to chromatin, leading to PARP1 removal from chromatin by VCP/p97. The chain is E3 ubiquitin-protein ligase RNF4 from Rattus norvegicus (Rat).